The following is a 549-amino-acid chain: Chaperonin GroEL (549 aa).

ATP-binding positions include 29–32, Lys-50, 86–90, Gly-414, 478–480, and Asp-494; these read TLGP, DGTTT, and NAA.

It belongs to the chaperonin (HSP60) family. Forms a cylinder of 14 subunits composed of two heptameric rings stacked back-to-back. Interacts with the co-chaperonin GroES.

The protein localises to the cytoplasm. The enzyme catalyses ATP + H2O + a folded polypeptide = ADP + phosphate + an unfolded polypeptide.. In terms of biological role, together with its co-chaperonin GroES, plays an essential role in assisting protein folding. The GroEL-GroES system forms a nano-cage that allows encapsulation of the non-native substrate proteins and provides a physical environment optimized to promote and accelerate protein folding. The polypeptide is Chaperonin GroEL (Psychrobacter cryohalolentis (strain ATCC BAA-1226 / DSM 17306 / VKM B-2378 / K5)).